The primary structure comprises 338 residues: Mycothiol acetyltransferase (338 aa).

N-acetyltransferase domains follow at residues 29–173 (PETY…HQLP) and 181–338 (ISLR…NKFQ). Asp55 lines the 1D-myo-inositol 2-(L-cysteinylamino)-2-deoxy-alpha-D-glucopyranoside pocket. 105-107 (LVV) is an acetyl-CoA binding site. Residues Glu208, Lys248, and Glu261 each coordinate 1D-myo-inositol 2-(L-cysteinylamino)-2-deoxy-alpha-D-glucopyranoside. Residues 265–267 (VGI) and 272–278 (QGKGLGK) contribute to the acetyl-CoA site. Tyr299 lines the 1D-myo-inositol 2-(L-cysteinylamino)-2-deoxy-alpha-D-glucopyranoside pocket.

This sequence belongs to the acetyltransferase family. MshD subfamily. In terms of assembly, monomer.

It catalyses the reaction 1D-myo-inositol 2-(L-cysteinylamino)-2-deoxy-alpha-D-glucopyranoside + acetyl-CoA = mycothiol + CoA + H(+). In terms of biological role, catalyzes the transfer of acetyl from acetyl-CoA to desacetylmycothiol (Cys-GlcN-Ins) to form mycothiol. This is Mycothiol acetyltransferase from Renibacterium salmoninarum (strain ATCC 33209 / DSM 20767 / JCM 11484 / NBRC 15589 / NCIMB 2235).